The following is a 211-amino-acid chain: Large ribosomal subunit protein uL3 (211 aa).

The residue at position 150 (Gln-150) is an N5-methylglutamine.

Belongs to the universal ribosomal protein uL3 family. As to quaternary structure, part of the 50S ribosomal subunit. Forms a cluster with proteins L14 and L19. Methylated by PrmB.

In terms of biological role, one of the primary rRNA binding proteins, it binds directly near the 3'-end of the 23S rRNA, where it nucleates assembly of the 50S subunit. The polypeptide is Large ribosomal subunit protein uL3 (Pseudomonas aeruginosa (strain LESB58)).